Here is a 149-residue protein sequence, read N- to C-terminus: Calmodulin-1 (149 aa).

The residue at position 2 (Ala-2) is an N-acetylalanine. EF-hand domains follow at residues 8–43 (EQIAEFKEAFSLFDKDGDGTITTKELGTVMRSLGQN), 44–79 (PTEAELQDMINEVDADGNGTIDFPEFLTMMARKMKD), 81–116 (DSEEEIREAFRVFDKDGNGFISAAELRHVMTNLGEK), and 117–149 (LTDEEVDEMIREADIDGDGQVNYEEFVTMMTSK). The Ca(2+) site is built by Asp-21, Asp-23, Asp-25, Thr-27, Glu-32, Asp-57, Asp-59, Asn-61, Thr-63, Glu-68, Asp-94, Asp-96, Asn-98, and Glu-105. Lys-116 is modified (N6,N6,N6-trimethyllysine). Ca(2+)-binding residues include Asp-130, Asp-132, Asp-134, Gln-136, and Glu-141.

The protein belongs to the calmodulin family.

Functionally, calmodulin mediates the control of a large number of enzymes, ion channels and other proteins by Ca(2+). Among the enzymes to be stimulated by the calmodulin-Ca(2+) complex are a number of protein kinases and phosphatases. This Branchiostoma floridae (Florida lancelet) protein is Calmodulin-1.